The sequence spans 290 residues: Diaminopimelate epimerase (290 aa).

2 residues coordinate substrate: Asn11 and Asn78. The Proton donor role is filled by Cys87. Substrate is bound by residues 88-89 (GN), Asn163, Asn199, and 217-218 (ER). The Proton acceptor role is filled by Cys226. 227 to 228 (GT) is a substrate binding site.

The protein belongs to the diaminopimelate epimerase family. As to quaternary structure, homodimer.

It is found in the cytoplasm. The enzyme catalyses (2S,6S)-2,6-diaminopimelate = meso-2,6-diaminopimelate. It functions in the pathway amino-acid biosynthesis; L-lysine biosynthesis via DAP pathway; DL-2,6-diaminopimelate from LL-2,6-diaminopimelate: step 1/1. Functionally, catalyzes the stereoinversion of LL-2,6-diaminopimelate (L,L-DAP) to meso-diaminopimelate (meso-DAP), a precursor of L-lysine and an essential component of the bacterial peptidoglycan. The chain is Diaminopimelate epimerase from Mycobacterium ulcerans (strain Agy99).